Here is a 431-residue protein sequence, read N- to C-terminus: Beta-lactamase hydrolase-like protein (431 aa).

The Zn(2+) site is built by His-212, His-214, and His-286. Asp-309 provides a ligand contact to substrate.

The protein belongs to the metallo-beta-lactamase superfamily. The cofactor is Zn(2+).

Its function is as follows. Could play a role in cell adherence or biofilm development. The protein is Beta-lactamase hydrolase-like protein of Agrobacterium fabrum (strain C58 / ATCC 33970) (Agrobacterium tumefaciens (strain C58)).